The sequence spans 67 residues: MAAKKGAKTTTKKSDYYKVEGNAVERLKKACPKCGAGVFMAEHLNRFACGKCGYMEYKKNEKTESEE.

The Zn(2+) site is built by cysteine 31, cysteine 34, cysteine 49, and cysteine 52. The C4-type zinc-finger motif lies at 31-52; that stretch reads CPKCGAGVFMAEHLNRFACGKC.

Belongs to the eukaryotic ribosomal protein eS31 family. As to quaternary structure, part of the 30S ribosomal subunit. Zn(2+) serves as cofactor.

This is Small ribosomal subunit protein eS31 from Methanococcus maripaludis (strain C7 / ATCC BAA-1331).